A 109-amino-acid chain; its full sequence is Aquaporin-2 (109 aa).

Over 1–6 (SIAFSK) the chain is Cytoplasmic. The helical transmembrane segment at 7 to 27 (AVFSEFLATLLFVFFGLGSAL) threads the bilayer. Residues 28–35 (NWPQALPS) lie on the Extracellular side of the membrane. Residues 36 to 54 (GLQIAMAFGLAIGTLVQTL) form a helical membrane-spanning segment. Residues 55 to 59 (GHISG) are Cytoplasmic-facing. The segment at residues 60–69 (AHINPAVTVA) is an intramembrane region (discontinuously helical). The NPA 1 signature appears at 63-65 (NPA). At 70-80 (CLVGCHVSFLR) the chain is on the cytoplasmic side. A helical membrane pass occupies residues 81–102 (AIFYVAAQLLGAVAGAALLHEL). Topologically, residues 103-109 (TPPDIRG) are extracellular.

This sequence belongs to the MIP/aquaporin (TC 1.A.8) family. In terms of assembly, homotetramer. In terms of processing, serine phosphorylation is necessary and sufficient for expression at the apical membrane. Endocytosis is not phosphorylation-dependent. N-glycosylated.

It localises to the apical cell membrane. The protein resides in the basolateral cell membrane. The protein localises to the cell membrane. Its subcellular location is the cytoplasmic vesicle membrane. It is found in the golgi apparatus. It localises to the trans-Golgi network membrane. It catalyses the reaction H2O(in) = H2O(out). The enzyme catalyses glycerol(in) = glycerol(out). Functionally, forms a water-specific channel that provides the plasma membranes of renal collecting duct with high permeability to water, thereby permitting water to move in the direction of an osmotic gradient. Plays an essential role in renal water homeostasis. Could also be permeable to glycerol. This is Aquaporin-2 from Orycteropus afer (Aardvark).